A 468-amino-acid chain; its full sequence is UDP-N-acetylmuramate--L-alanine ligase (468 aa).

G107–T113 is an ATP binding site.

It belongs to the MurCDEF family.

The protein resides in the cytoplasm. It carries out the reaction UDP-N-acetyl-alpha-D-muramate + L-alanine + ATP = UDP-N-acetyl-alpha-D-muramoyl-L-alanine + ADP + phosphate + H(+). Its pathway is cell wall biogenesis; peptidoglycan biosynthesis. In terms of biological role, cell wall formation. The sequence is that of UDP-N-acetylmuramate--L-alanine ligase from Roseiflexus sp. (strain RS-1).